The sequence spans 558 residues: SPATS2-like protein (558 aa).

Ala-2 is subject to N-acetylalanine. Over residues 63–79 (GKKKNNKRKRSKSKQHQ) the composition is skewed to basic residues. Disordered regions lie at residues 63–148 (GKKK…RGIT) and 161–202 (DGNP…SNAP). Composition is skewed to basic and acidic residues over residues 80-92 (GNKD…ERPE) and 110-142 (GCEK…EPPR). Ser-120 is modified (phosphoserine). Residues 279 to 344 (KEEAMDILTA…ARFSCDIEQL (66 aa)) are a coiled coil. The segment at 383 to 514 (KQGNFSRKSS…SEKARRRQHA (132 aa)) is disordered. The segment covering 416-433 (DACQQTMPTNKQQNGPSN) has biased composition (polar residues). Position 455 is a phosphoserine (Ser-455). Residues 469–485 (HEHRRQPHNGFRPKNKG) show a composition bias toward basic residues.

Belongs to the SPATS2 family.

The protein resides in the cytoplasm. It is found in the nucleus. Its subcellular location is the nucleolus. The sequence is that of SPATS2-like protein (Spats2l) from Rattus norvegicus (Rat).